The following is a 304-amino-acid chain: UTP--glucose-1-phosphate uridylyltransferase 1 (304 aa).

This sequence belongs to the UDPGP type 2 family.

The catalysed reaction is alpha-D-glucose 1-phosphate + UTP + H(+) = UDP-alpha-D-glucose + diphosphate. It functions in the pathway carbohydrate metabolism; nucleotide-sugar metabolism. This is UTP--glucose-1-phosphate uridylyltransferase 1 (hasC1) from Streptococcus pyogenes serotype M3 (strain ATCC BAA-595 / MGAS315).